Reading from the N-terminus, the 495-residue chain is Cytochrome P450 monooxygenase aneF (495 aa).

Residues 1–21 traverse the membrane as a helical segment; that stretch reads MIAGLVLVVLLTKYLQRVFLH. Asn-47 carries an N-linked (GlcNAc...) asparagine glycan. Residue Cys-437 coordinates heme.

The protein belongs to the cytochrome P450 family. The cofactor is heme.

The protein resides in the membrane. It catalyses the reaction dauca-4,7-diene + 3 reduced [NADPH--hemoprotein reductase] + 3 O2 = asperaculane D + 3 oxidized [NADPH--hemoprotein reductase] + 4 H2O + 4 H(+). It functions in the pathway secondary metabolite biosynthesis. Its function is as follows. Cytochrome P450 monooxygenase; part of the gene cluster that mediates the biosynthesis of aculenes, a unique type of norsesquiterpenes that contain a nordaucane skeleton linked to an L-proline moiety and are of mixed biosynthetic origin. The pathway begins with the synthesis of dauca-4,7-diene by the terpene cyclase aneC using farnesyl pyrophosphate (FPP) as substrate. The cytochrome P450 monooxygenase aneF then performs the initial oxidation at C-12 of dauca-4,7-diene to yield asperaculane D. Asperaculane D is substrate of the cytochrome P450 monooxygenase aneD for C-10 hydroxylation to yield asperaculane E. The cytochrome P450 monooxygenase aneG then converts asperaculane E into aculene D via C-2 oxidation. The monomodular nonribosomal peptide synthtase aneB adenylates L-proline and the thiohydrolase aneE transfers this activated L-proline derivative to aculenes D and C to produce respectively aculenes B and A. The dioxygenase aneA converts aculene D into aculene C, and aculene B into aculene A by introducing the 5,6-alkene moiety. Asperculanes A, B, C and F, as well as 14-prolyl asperculane C, might be shunt products of the pathway. The protein is Cytochrome P450 monooxygenase aneF of Aspergillus aculeatus (strain ATCC 16872 / CBS 172.66 / WB 5094).